A 319-amino-acid chain; its full sequence is Ribonucleoside-diphosphate reductase small chain (319 aa).

Fe cation contacts are provided by aspartate 70, glutamate 101, and histidine 104. The active site involves tyrosine 108. Fe cation-binding residues include glutamate 163, glutamate 197, and histidine 200. The segment at 313 to 319 is interaction with R1; it reads FSLDVDF.

The protein belongs to the ribonucleoside diphosphate reductase small chain family. Interacts with RNR1/OPG080 subunit. Can interact with host RNR1 supunit. Requires Fe cation as cofactor.

It carries out the reaction a 2'-deoxyribonucleoside 5'-diphosphate + [thioredoxin]-disulfide + H2O = a ribonucleoside 5'-diphosphate + [thioredoxin]-dithiol. Functionally, ribonucleoside-diphosphate reductase holoenzyme provides the precursors necessary for viral DNA synthesis. Allows virus growth in non-dividing cells. Catalyzes the biosynthesis of deoxyribonucleotides from the corresponding ribonucleotides. The polypeptide is Ribonucleoside-diphosphate reductase small chain (OPG048) (Vaccinia virus (strain Copenhagen) (VACV)).